A 47-amino-acid polypeptide reads, in one-letter code: KIKSGWERLTSESEYACPAIDKFCEDHCAAKKAVGKCDDFKCNCIKL.

The BetaSPN-type CS-alpha/beta domain maps to 14–47 (EYACPAIDKFCEDHCAAKKAVGKCDDFKCNCIKL). 3 disulfides stabilise this stretch: C17–C37, C24–C42, and C28–C44.

It belongs to the long chain scorpion toxin family. Class 2 subfamily. As to expression, expressed by the venom gland.

It localises to the secreted. The protein resides in the target cell membrane. Its function is as follows. Blocks voltage-gated potassium channels. Its application (10 uM) to cells recombinantly expressing channels results in membrane damage and cell lysis. In Tityus costatus (Brazilian scorpion), this protein is Potassium channel toxin TcoKIK.